Reading from the N-terminus, the 572-residue chain is Urease subunit alpha (572 aa).

The 439-residue stretch at 134–572 folds into the Urease domain; sequence GGIDSHIHFI…LPLAQRYFLF (439 aa). His139, His141, and Lys222 together coordinate Ni(2+). Residue Lys222 is modified to N6-carboxylysine. His224 provides a ligand contact to substrate. Positions 251 and 277 each coordinate Ni(2+). The active-site Proton donor is His325. Asp365 is a Ni(2+) binding site.

The protein belongs to the metallo-dependent hydrolases superfamily. Urease alpha subunit family. In terms of assembly, heterotrimer of UreA (gamma), UreB (beta) and UreC (alpha) subunits. Three heterotrimers associate to form the active enzyme. Ni cation is required as a cofactor. Post-translationally, carboxylation allows a single lysine to coordinate two nickel ions.

It localises to the cytoplasm. It catalyses the reaction urea + 2 H2O + H(+) = hydrogencarbonate + 2 NH4(+). It functions in the pathway nitrogen metabolism; urea degradation; CO(2) and NH(3) from urea (urease route): step 1/1. The polypeptide is Urease subunit alpha (Paracidovorax citrulli (strain AAC00-1) (Acidovorax citrulli)).